The sequence spans 23 residues: Cytochrome c3-1 (23 aa).

Positions 1–23 (AAPKAPADGLKMDKTKQXVVFNH) are disordered. Heme is bound at residue His23.

In terms of processing, binds 4 heme groups per subunit.

It localises to the periplasm. Functionally, participates in sulfate respiration coupled with phosphorylation by transferring electrons from the enzyme dehydrogenase to ferredoxin. The polypeptide is Cytochrome c3-1 (Nitratidesulfovibrio vulgaris (Desulfovibrio vulgaris)).